A 360-amino-acid polypeptide reads, in one-letter code: Phospho-N-acetylmuramoyl-pentapeptide-transferase (360 aa).

The next 10 membrane-spanning stretches (helical) occupy residues 27-47, 71-91, 93-113, 128-148, 168-188, 199-219, 239-259, 262-282, 288-308, and 337-357; these read GAMI…INSL, TPTM…LLWA, LASV…AIGF, FSGK…AFVI, FVVN…VGAG, GLAI…AYLS, LAVV…FNAP, AIFM…TVAV, IVLA…IIQV, and QVVI…LSTL.

It belongs to the glycosyltransferase 4 family. MraY subfamily. Mg(2+) serves as cofactor.

It is found in the cell inner membrane. The enzyme catalyses UDP-N-acetyl-alpha-D-muramoyl-L-alanyl-gamma-D-glutamyl-meso-2,6-diaminopimeloyl-D-alanyl-D-alanine + di-trans,octa-cis-undecaprenyl phosphate = di-trans,octa-cis-undecaprenyl diphospho-N-acetyl-alpha-D-muramoyl-L-alanyl-D-glutamyl-meso-2,6-diaminopimeloyl-D-alanyl-D-alanine + UMP. It participates in cell wall biogenesis; peptidoglycan biosynthesis. Catalyzes the initial step of the lipid cycle reactions in the biosynthesis of the cell wall peptidoglycan: transfers peptidoglycan precursor phospho-MurNAc-pentapeptide from UDP-MurNAc-pentapeptide onto the lipid carrier undecaprenyl phosphate, yielding undecaprenyl-pyrophosphoryl-MurNAc-pentapeptide, known as lipid I. The polypeptide is Phospho-N-acetylmuramoyl-pentapeptide-transferase (Brucella anthropi (strain ATCC 49188 / DSM 6882 / CCUG 24695 / JCM 21032 / LMG 3331 / NBRC 15819 / NCTC 12168 / Alc 37) (Ochrobactrum anthropi)).